The sequence spans 408 residues: Putative glutamate--cysteine ligase 2 (408 aa).

Belongs to the glutamate--cysteine ligase type 2 family. YbdK subfamily.

The enzyme catalyses L-cysteine + L-glutamate + ATP = gamma-L-glutamyl-L-cysteine + ADP + phosphate + H(+). In terms of biological role, ATP-dependent carboxylate-amine ligase which exhibits weak glutamate--cysteine ligase activity. In Bradyrhizobium sp. (strain BTAi1 / ATCC BAA-1182), this protein is Putative glutamate--cysteine ligase 2.